An 86-amino-acid polypeptide reads, in one-letter code: Chymotrypsin inhibitor (86 aa).

The first 16 residues, 1–16 (MKTLCIFLVLVVAVAA), serve as a signal peptide directing secretion. Cystine bridges form between Cys26-Cys58, Cys38-Cys50, Cys42-Cys82, and Cys60-Cys76. One can recognise a TIL domain in the interval 26-82 (CPPNKEFGSYGDCPPSCLKNPPNFCTLKLNYGCKCKEGYVLTRYQDYESDCIKPEEC).

This sequence belongs to the serine protease inhibitor-like (TIL domain-containing) family. In terms of tissue distribution, only expressed in fat body.

It is found in the secreted. Its function is as follows. Serine protease inhibitor that inhibits chymotrypsin (IC(50)=34.13 nM, Ki=49.85 nM), microbial serine proteases (subtilisin A (IC(50)=21.31 nM, Ki=20.51 nM) and proteinase K (IC(50)=52.56 nM, Ki=65.42 nM)), as well as human neutrophil elastase (IC(50)=11.54 nM, Ki=8.74 nM), and porcine pancreatic elastase (IC(50)=19.07 nM, Ki=11.32 nM). In Araneus ventricosus (Orbweaver spider), this protein is Chymotrypsin inhibitor.